The sequence spans 133 residues: Protein PsiE homolog (133 aa).

A run of 4 helical transmembrane segments spans residues 13-33, 55-75, 81-101, and 105-125; these read LQWILNIALIILSIVLSIFLI, VESIIVYFLYFEFIALIIKYF, FPLRYFIYIGITALIRLIIVS, and PMETLLYAGAILILVIALYIS.

The protein belongs to the PsiE family.

It localises to the cell membrane. The sequence is that of Protein PsiE homolog from Bacillus cereus (strain ATCC 10987 / NRS 248).